We begin with the raw amino-acid sequence, 252 residues long: Protein Flattop homolog (252 aa).

Positions 177 to 252 (TEKRRRKRTI…EKERKAAKGH (76 aa)) are disordered. Residues 218-252 (PKDKPKDKPKDKEAGKKDKTKDKGKEKERKAAKGH) are compositionally biased toward basic and acidic residues.

The protein belongs to the Flattop family.

This chain is Protein Flattop homolog, found in Drosophila melanogaster (Fruit fly).